The chain runs to 343 residues: MALRLLRLVPPRVGGIHTSVQFKLQYGPLAYILGEKATKKMTEKSKLITVDGNICSGKSKLAKEIAEKLGLKHFPEAGIHYVDSTTGDGKPLPVQFSGNCSLEKFYDDPKSNDGNSYRLQAWLYASRLLQYADALEHLLSTGQGVVLERSIYSDFVFLEAMYRQGFIRKQCVDHYNQVKKVTICEYLPPHVVVYVDVPVPEVQSRIQKKGNPHEMKITSAYLQDIENAYKGTFLPEMSEKCEVLQYSAWEAQDAEKVVEDIEYLKYDKGPWLDQNDRNLHKLRMLVQDKLEVLNYTSIPVFLPEVTVGAHQSDQVFQEFTELPGRKYRAGYNEDVGDKWIWLK.

The N-terminal 23 residues, 1–23, are a transit peptide targeting the mitochondrion; sequence MALRLLRLVPPRVGGIHTSVQFK. Lys-110 is subject to N6-acetyllysine; alternate. Lys-110 carries the N6-succinyllysine; alternate modification. Ser-238 is subject to Phosphoserine; by PINK1.

It belongs to the complex I NDUFA10 subunit family. Complex I is composed of 45 different subunits. This a component of the hydrophobic protein fraction. FAD serves as cofactor. Post-translationally, phosphorylation at Ser-238 by PINK1 is required for the binding and/or reduction of the complex I substrate ubiquinone.

The protein localises to the mitochondrion matrix. Its function is as follows. Accessory subunit of the mitochondrial membrane respiratory chain NADH dehydrogenase (Complex I), that is believed not to be involved in catalysis. Complex I functions in the transfer of electrons from NADH to the respiratory chain. The immediate electron acceptor for the enzyme is believed to be ubiquinone. In Bos taurus (Bovine), this protein is NADH dehydrogenase [ubiquinone] 1 alpha subcomplex subunit 10, mitochondrial (NDUFA10).